Here is a 116-residue protein sequence, read N- to C-terminus: UPF0102 protein LA_2381 (116 aa).

Belongs to the UPF0102 family.

In Leptospira interrogans serogroup Icterohaemorrhagiae serovar Lai (strain 56601), this protein is UPF0102 protein LA_2381.